The following is a 536-amino-acid chain: uncharacterized protein (536 aa).

2 disordered regions span residues 1-76 and 204-237; these read MSFT…SPAS and NWNSSSSFTSSTSSTPISSSYSSSGTLPSKSNKS. 2 stretches are compositionally biased toward low complexity: residues 7–76 and 204–234; these read TSSV…SPAS and NWNSSSSFTSSTSSTPISSSYSSSGTLPSKS. A helical transmembrane segment spans residues 247 to 267; sequence CSVAIPVGVVLILIGLGIFLW. 2 disordered regions span residues 287-354 and 373-536; these read YGFN…LLGG and DASD…LNLF. A compositionally biased stretch (polar residues) spans 290–326; it reads NPNQPSNFRSPNRAPSTNNRYRGWNGSPTPAAGNNTN. Low complexity predominate over residues 327–350; the sequence is GRPVAPRPSAGAGGANPPAASQPG. A helical transmembrane segment spans residues 351–371; sequence LLGGSSNSAGPIAAATAAGVG. The span at 403–424 shows a compositional bias: polar residues; that stretch reads SASNEAEATMPPSNGSNFSEGL. Low complexity predominate over residues 430-454; that stretch reads ESGPAVGAAGAAAEAAEHSGSGSDS. Residues 480–509 show a composition bias toward polar residues; sequence SYGSRAALSSRSQSNLLSPTSTGASNQPNY. Residues 517–527 are compositionally biased toward low complexity; that stretch reads SSSNVSIPRSS.

The protein localises to the membrane. This is an uncharacterized protein from Schizosaccharomyces pombe (strain 972 / ATCC 24843) (Fission yeast).